A 202-amino-acid chain; its full sequence is Nucleoside triphosphate pyrophosphatase (202 aa).

The active-site Proton acceptor is D79.

It belongs to the Maf family. It depends on a divalent metal cation as a cofactor.

It localises to the cytoplasm. The enzyme catalyses a ribonucleoside 5'-triphosphate + H2O = a ribonucleoside 5'-phosphate + diphosphate + H(+). The catalysed reaction is a 2'-deoxyribonucleoside 5'-triphosphate + H2O = a 2'-deoxyribonucleoside 5'-phosphate + diphosphate + H(+). Nucleoside triphosphate pyrophosphatase. May have a dual role in cell division arrest and in preventing the incorporation of modified nucleotides into cellular nucleic acids. In Rhodopseudomonas palustris (strain ATCC BAA-98 / CGA009), this protein is Nucleoside triphosphate pyrophosphatase.